The sequence spans 647 residues: ATP-binding protein Uup (647 aa).

2 ABC transporter domains span residues 1 to 253 and 320 to 546; these read MALI…RVEA and FEME…AKAK. Residues 36 to 43 and 352 to 359 each bind ATP; these read GRNGAGKS and GPNGCGKT. Residues 545-563 show a composition bias toward basic and acidic residues; it reads AKKSEPLKEESAVKNDRTS. Residues 545–569 form a disordered region; it reads AKKSEPLKEESAVKNDRTSKPKSVK. The segment at 559–647 is C-terminal domain (CTD), binds DNA; sequence NDRTSKPKSV…EKKNLVEGKA (89 aa).

The protein belongs to the ABC transporter superfamily. ABCF family. Uup subfamily.

Its subcellular location is the cytoplasm. It catalyses the reaction ATP + H2O = ADP + phosphate + H(+). Probably plays a role in ribosome assembly or function. May be involved in resolution of branched DNA intermediates that result from template switching in postreplication gaps. Binds DNA and has ATPase activity. This Haemophilus influenzae (strain ATCC 51907 / DSM 11121 / KW20 / Rd) protein is ATP-binding protein Uup.